A 119-amino-acid polypeptide reads, in one-letter code: Secreted RxLR effector protein RXLR-C04 (119 aa).

Residues Met-1–Ala-22 form the signal peptide. The RxLR-dEER signature appears at Arg-40–Val-77. Asn-46 is a glycosylation site (N-linked (GlcNAc...) asparagine).

Belongs to the RxLR effector family.

It localises to the secreted. The protein localises to the host cytoplasm. Its subcellular location is the host nucleus. In terms of biological role, secreted effector that suppresses pattern-triggered immunity (PTI) in plant host. The protein is Secreted RxLR effector protein RXLR-C04 of Plasmopara halstedii (Downy mildew of sunflower).